We begin with the raw amino-acid sequence, 587 residues long: Probable intramembrane protease YKL100C (587 aa).

Residues 1–85 (MDKYLNSFVD…HSLVFNYATL (85 aa)) lie on the Lumenal side of the membrane. Residues 86–106 (VLIASALVVIGSFTSISSIPF) traverse the membrane as a helical segment. Residues 107 to 156 (TALPPTREHSLFDPTDFDVDHDCHVIYRENDEDKKKKKKSKRFFDMMDEK) lie on the Cytoplasmic side of the membrane. A helical membrane pass occupies residues 157-177 (HAIILPLTSGCTLLALYFVIK). Residues 178–192 (KLHLNWLKYVVKILN) are Lumenal-facing. The helical transmembrane segment at 193-213 (FNITLLNIPAGTFVYSYFLNS) threads the bilayer. At 214–303 (LFRNLSHLAS…KSKRQISNMY (90 aa)) the chain is on the cytoplasmic side. A helical membrane pass occupies residues 304–324 (LNSALIVSFVLSIVSTVYFYL). Over 325–328 (SPND) the chain is Lumenal. A helical membrane pass occupies residues 329–349 (WLISNAVSMNMAIWSIAQLKL). Topologically, residues 350–351 (KN) are cytoplasmic. Residues 352–372 (LKSGALILIALFFYDICFVFG) form a helical membrane-spanning segment. Asp-366 is an active-site residue. The Lumenal portion of the chain corresponds to 373-401 (TDVMVTVATNLDIPVKLSLPVKFNTAQNN). Residues 402–422 (FNFSILGLGDIALPGMFIAMC) traverse the membrane as a helical segment. Asp-411 is an active-site residue. Residues 423-450 (YKYDIWKWHLDHDDTEFHFLNWSYVGKY) are Cytoplasmic-facing. Residues 451-471 (FITAMVSYVASLVSAMVSLSI) form a helical membrane-spanning segment. Over 472–475 (FNTA) the chain is Lumenal. A helical transmembrane segment spans residues 476 to 496 (QPALLYIVPSLLISTILVACW). The PAL motif lies at 477–479 (PAL). Over 497–587 (NKDFKQFWNF…EEDLLDDESS (91 aa)) the chain is Cytoplasmic. Positions 561–587 (EFVQEEDLSDSSEEELSEEDLLDDESS) are disordered.

The protein belongs to the peptidase A22B family.

Its subcellular location is the membrane. It is found in the endoplasmic reticulum membrane. In terms of biological role, may act as intramembrane protease. The polypeptide is Probable intramembrane protease YKL100C (Saccharomyces cerevisiae (strain ATCC 204508 / S288c) (Baker's yeast)).